A 553-amino-acid polypeptide reads, in one-letter code: MSATATVATTPEGIPVIILKEGSSRTYGKEALRINIAAVKAVEEALKTTYGPRGMDKMLVDSLGDITITNDGATILDKMDLQHPAAKLLVQIAKGQDEETADGTKTAVIFSGELVKKAEELLYKEIHPTIIVSGYKKAEEMAIKTIEEISTKVSVNDTEILRKVALTSLSSKAVAGAREHLADIVVKAITQVAELRGDKWYVDLDNVQIVKKHGGSINDTQIVYGIIVDKEVVHPGMPKRVENAKIALLDASLEVEKPELDAEIRINDPTQMKKFLDEEENILKEKVDKIAQTGANVVICQKGIDEVAQHYLAKKGILAVRRAKKSDLEKLARATGGRVVSNIDELTSQDLGYATLVEERKIGEDKMVFIEGAKNPKAVSILIRGGLERVVDETERALRDALGTVADVVRDGRAIAGGGAVETEIAKRLRKYAPQVGGKEQLAIEAYANALESLVMILIENGGFDPIELLVKLRSAHENETNKWHGINVYTGQIQDMWSLGVIEPAVVKMNAIKAATEASTLILRIDDLISAGKKSEGKTGEKKESEKGKEED.

A disordered region spans residues 534–553 (KKSEGKTGEKKESEKGKEED).

This sequence belongs to the TCP-1 chaperonin family. Forms a Heterooligomeric complex of two stacked eight-membered rings.

Molecular chaperone; binds unfolded polypeptides in vitro, and has a weak ATPase activity. This Sulfolobus acidocaldarius (strain ATCC 33909 / DSM 639 / JCM 8929 / NBRC 15157 / NCIMB 11770) protein is Thermosome subunit beta (thsB).